A 432-amino-acid chain; its full sequence is Glutamyl-tRNA reductase (432 aa).

Residues 55–58 (TCNR), Ser113, 118–120 (EAQ), and Gln124 each bind substrate. Cys56 acts as the Nucleophile in catalysis. An NADP(+)-binding site is contributed by 193 to 198 (GAGEMI).

The protein belongs to the glutamyl-tRNA reductase family. As to quaternary structure, homodimer.

It catalyses the reaction (S)-4-amino-5-oxopentanoate + tRNA(Glu) + NADP(+) = L-glutamyl-tRNA(Glu) + NADPH + H(+). Its pathway is porphyrin-containing compound metabolism; protoporphyrin-IX biosynthesis; 5-aminolevulinate from L-glutamyl-tRNA(Glu): step 1/2. Its function is as follows. Catalyzes the NADPH-dependent reduction of glutamyl-tRNA(Glu) to glutamate 1-semialdehyde (GSA). The sequence is that of Glutamyl-tRNA reductase from Paracidovorax citrulli (strain AAC00-1) (Acidovorax citrulli).